The following is a 550-amino-acid chain: Calcyphosin-2 (550 aa).

Disordered stretches follow at residues 1 to 20 (MVPP…DNFS) and 175 to 198 (ISDP…DSER). Over residues 181 to 190 (DLNTKNQESS) the composition is skewed to polar residues. EF-hand domains lie at 379-414 (RILT…FHLE), 415-452 (VSEQ…EMNE), and 453-488 (YRKS…KKHP). The Ca(2+) site is built by Asp-466, Asn-468, Thr-470, and Asp-477.

This Mus musculus (Mouse) protein is Calcyphosin-2 (Caps2).